Consider the following 162-residue polypeptide: Phosphopantetheine adenylyltransferase (162 aa).

Ser-9 is a substrate binding site. Residues 9–10 (SF) and His-17 contribute to the ATP site. Substrate is bound by residues Lys-41, Val-77, and Lys-91. ATP-binding positions include 92 to 94 (GLR), Glu-102, and 126 to 132 (YAFLSSS).

This sequence belongs to the bacterial CoaD family. In terms of assembly, homohexamer. The cofactor is Mg(2+).

The protein localises to the cytoplasm. It carries out the reaction (R)-4'-phosphopantetheine + ATP + H(+) = 3'-dephospho-CoA + diphosphate. It participates in cofactor biosynthesis; coenzyme A biosynthesis; CoA from (R)-pantothenate: step 4/5. Its function is as follows. Reversibly transfers an adenylyl group from ATP to 4'-phosphopantetheine, yielding dephospho-CoA (dPCoA) and pyrophosphate. This chain is Phosphopantetheine adenylyltransferase, found in Frankia alni (strain DSM 45986 / CECT 9034 / ACN14a).